The chain runs to 440 residues: Xylose isomerase (440 aa).

Residues H101 and D104 contribute to the active site. Residues E232, E268, H271, D296, D307, D309, and D339 each contribute to the Mg(2+) site.

Belongs to the xylose isomerase family. As to quaternary structure, homotetramer. It depends on Mg(2+) as a cofactor.

The protein localises to the cytoplasm. It carries out the reaction alpha-D-xylose = alpha-D-xylulofuranose. The polypeptide is Xylose isomerase (Escherichia fergusonii (strain ATCC 35469 / DSM 13698 / CCUG 18766 / IAM 14443 / JCM 21226 / LMG 7866 / NBRC 102419 / NCTC 12128 / CDC 0568-73)).